A 319-amino-acid polypeptide reads, in one-letter code: Acetyl-coenzyme A carboxylase carboxyl transferase subunit alpha (319 aa).

In terms of domain architecture, CoA carboxyltransferase C-terminal spans 35–296 (NLDEEVQRLR…KAQLLADLND (262 aa)).

The protein belongs to the AccA family. As to quaternary structure, acetyl-CoA carboxylase is a heterohexamer composed of biotin carboxyl carrier protein (AccB), biotin carboxylase (AccC) and two subunits each of ACCase subunit alpha (AccA) and ACCase subunit beta (AccD).

It is found in the cytoplasm. The enzyme catalyses N(6)-carboxybiotinyl-L-lysyl-[protein] + acetyl-CoA = N(6)-biotinyl-L-lysyl-[protein] + malonyl-CoA. The protein operates within lipid metabolism; malonyl-CoA biosynthesis; malonyl-CoA from acetyl-CoA: step 1/1. Component of the acetyl coenzyme A carboxylase (ACC) complex. First, biotin carboxylase catalyzes the carboxylation of biotin on its carrier protein (BCCP) and then the CO(2) group is transferred by the carboxyltransferase to acetyl-CoA to form malonyl-CoA. This is Acetyl-coenzyme A carboxylase carboxyl transferase subunit alpha from Yersinia pseudotuberculosis serotype O:3 (strain YPIII).